The sequence spans 1927 residues: Lactase/phlorizin hydrolase (1927 aa).

Residues 1–19 (MELSWHVVFIALLSFSCWG) form the signal peptide. Residues 20-868 (SDWESDRNFI…NTVNLPSKVR (849 aa)) constitute a propeptide, XBetaGly. Over 20–1882 (SDWESDRNFI…LMLGTTEAQT (1863 aa)) the chain is Extracellular. N-linked (GlcNAc...) asparagine glycosylation occurs at Asn42. Positions 44-286 (SGLLGDQSSN…FIFNLKLPDC (243 aa)) are glycosyl hydrolase-1 1; Region I. A glycosyl hydrolase-1 2; Region II region spans residues 362–855 (IWEAFANQSR…GFLTKGAKRL (494 aa)). Residues Asn368, Asn418, Asn512, Asn821, Asn934, Asn946, and Asn989 are each glycosylated (N-linked (GlcNAc...) asparagine). Residues 902 to 1366 (TFRDDFLWGV…EVITNNGMPL (465 aa)) are glycosyl hydrolase-1 3; Region III. Phlorizin hydrolase/glycosylceramidase activity. Glu1065 (proton donor; for phlorizin hydrolase/Glycosylceramidase activity) is an active-site residue. Asn1174 carries N-linked (GlcNAc...) asparagine glycosylation. The tract at residues 1220–1244 (RLNPPSYEDDQEMAEEEDPSWPSTA) is disordered. Residues 1226 to 1238 (YEDDQEMAEEEDP) are compositionally biased toward acidic residues. Glu1273 functions as the Nucleophile; for phlorizin hydrolase/Glycosylceramidase activity in the catalytic mechanism. Residues Asn1340 and Asn1508 are each glycosylated (N-linked (GlcNAc...) asparagine). The segment at 1373–1846 (LYGRFPEGFI…CNGFPDPATG (474 aa)) is glycosyl hydrolase-1 4; Region IV. Lactase activity. The active-site Proton donor; for lactase activity is Glu1538. The required for homodimerization and transport to the plasma membrane stretch occupies residues 1647 to 1927 (RDRSLAAGLN…QQELSPVSSF (281 aa)). Asn1656 and Asn1672 each carry an N-linked (GlcNAc...) asparagine glycan. Glu1749 (nucleophile; for lactase activity) is an active-site residue. Residues Asn1761 and Asn1814 are each glycosylated (N-linked (GlcNAc...) asparagine). The helical transmembrane segment at 1883–1901 (ALYVLFSLVLLGVCGLAFL) threads the bilayer. Residues 1902-1927 (SYKYCKRSKQGKTQRSQQELSPVSSF) lie on the Cytoplasmic side of the membrane.

Belongs to the glycosyl hydrolase 1 family. As to quaternary structure, homodimer. N-glycosylated. As to expression, specifically expressed in small intestine.

Its subcellular location is the apical cell membrane. The enzyme catalyses lactose + H2O = beta-D-galactose + D-glucose. It carries out the reaction phlorizin + H2O = phloretin + beta-D-glucose. The catalysed reaction is D-cellobiose + H2O = beta-D-glucose + D-glucose. It catalyses the reaction quercetin 4'-O-beta-D-glucoside + H2O = quercetin + beta-D-glucose. The enzyme catalyses quercetin 3-O-beta-D-glucoside + H2O = quercetin + beta-D-glucose. It carries out the reaction kaempferol 3-O-beta-D-glucoside + H2O = kaempferol + beta-D-glucose. The catalysed reaction is luteolin 7-O-beta-D-glucoside + H2O = luteolin + beta-D-glucose. It catalyses the reaction luteolin 4'-O-beta-D-glucoside + H2O = luteolin + beta-D-glucose. The enzyme catalyses (2S)-naringenin 7-O-beta-D-glucoside + H2O = (2S)-naringenin + beta-D-glucose. It carries out the reaction eriodictyol-7-O-beta-D-glucoside + H2O = (S)-eriodictyol + beta-D-glucose. The catalysed reaction is apigenin 7-O-beta-D-glucoside + H2O = apigenin + beta-D-glucose. It catalyses the reaction daidzein 7-O-beta-D-glucoside + H2O = daidzein + beta-D-glucose + H(+). The enzyme catalyses genistein 7-O-beta-D-glucoside + H2O = genistein + beta-D-glucose. It carries out the reaction a beta-D-galactosyl-N-acylsphingosine + H2O = a ceramide + beta-D-galactose.. The catalysed reaction is beta-D-glucosyl-(1&lt;-&gt;1')-N-hexadecanoylsphing-4-enine + H2O = N-hexadecanoylsphing-4-enine + beta-D-glucose. It catalyses the reaction beta-D-galactosyl-(1&lt;-&gt;1')-N-hexadecanoylsphing-4-enine + H2O = beta-D-galactose + N-hexadecanoylsphing-4-enine. The enzyme catalyses beta-D-galactosyl-(1&lt;-&gt;1')-N-hexadecanoylsphinganine + H2O = N-hexadecanoylsphinganine + beta-D-galactose. It carries out the reaction beta-D-glucosyl-(1&lt;-&gt;1')-N-hexadecanoylsphinganine + H2O = N-hexadecanoylsphinganine + beta-D-glucose. Its function is as follows. Broad specificity glycosidase of the intestinal brush border membrane that hydrolyzes lactose, the main sugar in mammalian milk, to produce D-glucose and D-galactose. The mature protein is composed of two domains that catalyze the hydrolysis of beta-glucopyranosides and beta-galactopyranosides, with a preference for hydrophilic aglycones (in lactose and cellobiose) for one domain and hydrophobic aglycones (in phlorizin and glycosylceramides) for the other. This is Lactase/phlorizin hydrolase from Homo sapiens (Human).